A 64-amino-acid chain; its full sequence is MGMRMMFTVFLLVVLTTTVVSFPSDSASDGRDDEAKDERSDIYESKRDGRCCHPACGKYYSCGR.

The signal sequence occupies residues Met1–Ser21. Positions Phe22–Gly49 are excised as a propeptide. Disulfide bonds link Cys51–Cys56 and Cys52–Cys62. The residue at position 62 (Cys62) is a Cysteine amide.

Belongs to the conotoxin A superfamily. As to expression, expressed by the venom duct.

Its subcellular location is the secreted. This chain is Alpha-conotoxin CnIL, found in Conus consors (Singed cone).